Reading from the N-terminus, the 299-residue chain is DNA-binding transcriptional activator HetR (299 aa).

Residue Ser152 is part of the active site.

It belongs to the peptidase S48 family. In terms of assembly, homodimer; disulfide-linked.

In terms of biological role, controls heterocyst differentiation. Dimerization is required for DNA-binding. Has both a protease and a DNA-binding activity. Increased expression leads to more heterocysts than usual. In Nostoc punctiforme (strain ATCC 29133 / PCC 73102), this protein is DNA-binding transcriptional activator HetR.